We begin with the raw amino-acid sequence, 385 residues long: 8-amino-7-oxononanoate synthase (385 aa).

Arg-21 contributes to the substrate binding site. 108–109 (GF) provides a ligand contact to pyridoxal 5'-phosphate. His-133 lines the substrate pocket. The pyridoxal 5'-phosphate site is built by Ser-179, His-207, and Thr-233. Lys-236 carries the post-translational modification N6-(pyridoxal phosphate)lysine. Thr-352 provides a ligand contact to substrate.

Belongs to the class-II pyridoxal-phosphate-dependent aminotransferase family. BioF subfamily. In terms of assembly, homodimer. Requires pyridoxal 5'-phosphate as cofactor.

The catalysed reaction is 6-carboxyhexanoyl-[ACP] + L-alanine + H(+) = (8S)-8-amino-7-oxononanoate + holo-[ACP] + CO2. It participates in cofactor biosynthesis; biotin biosynthesis. Catalyzes the decarboxylative condensation of pimeloyl-[acyl-carrier protein] and L-alanine to produce 8-amino-7-oxononanoate (AON), [acyl-carrier protein], and carbon dioxide. This is 8-amino-7-oxononanoate synthase from Salmonella agona (strain SL483).